We begin with the raw amino-acid sequence, 321 residues long: Ribosomal RNA small subunit methyltransferase H (321 aa).

Residues 40-42 (GGH), Asp-60, Phe-84, Asp-106, and Gln-113 each bind S-adenosyl-L-methionine.

The protein belongs to the methyltransferase superfamily. RsmH family.

It localises to the cytoplasm. It catalyses the reaction cytidine(1402) in 16S rRNA + S-adenosyl-L-methionine = N(4)-methylcytidine(1402) in 16S rRNA + S-adenosyl-L-homocysteine + H(+). Specifically methylates the N4 position of cytidine in position 1402 (C1402) of 16S rRNA. The polypeptide is Ribosomal RNA small subunit methyltransferase H (Histophilus somni (strain 2336) (Haemophilus somnus)).